The sequence spans 303 residues: UDP-3-O-acyl-N-acetylglucosamine deacetylase (303 aa).

Zn(2+) is bound by residues histidine 78, histidine 237, and aspartate 241. Histidine 264 acts as the Proton donor in catalysis.

It belongs to the LpxC family. The cofactor is Zn(2+).

The catalysed reaction is a UDP-3-O-[(3R)-3-hydroxyacyl]-N-acetyl-alpha-D-glucosamine + H2O = a UDP-3-O-[(3R)-3-hydroxyacyl]-alpha-D-glucosamine + acetate. It functions in the pathway glycolipid biosynthesis; lipid IV(A) biosynthesis; lipid IV(A) from (3R)-3-hydroxytetradecanoyl-[acyl-carrier-protein] and UDP-N-acetyl-alpha-D-glucosamine: step 2/6. In terms of biological role, catalyzes the hydrolysis of UDP-3-O-myristoyl-N-acetylglucosamine to form UDP-3-O-myristoylglucosamine and acetate, the committed step in lipid A biosynthesis. The protein is UDP-3-O-acyl-N-acetylglucosamine deacetylase of Xanthomonas campestris pv. campestris (strain B100).